A 1005-amino-acid chain; its full sequence is DNA double-strand break repair Rad50 ATPase (1005 aa).

ATP contacts are provided by residues K14, 35–40 (GSGKSS), 62–64 (ITK), and Q134. Coiled coils occupy residues 189–230 (KENY…IEKL), 292–321 (LVDE…KQLE), 346–379 (LDTL…EIEK), and 404–498 (AVEY…LKEV). The 98-residue stretch at 457–554 (IEEKKKVLEN…DIEKLKKEID (98 aa)) folds into the Zinc-hook domain. Zn(2+)-binding residues include C502 and C505. Coiled-coil stretches lie at residues 523 to 600 (TQLN…YVIN), 656 to 692 (KEKC…ELIE), and 800 to 834 (RQEL…LKEM).

The protein belongs to the SMC family. RAD50 subfamily. Homodimer. Forms a heterotetramer composed of two Mre11 subunits and two Rad50 subunits. Zn(2+) serves as cofactor.

Its function is as follows. Part of the Rad50/Mre11 complex, which is involved in the early steps of DNA double-strand break (DSB) repair. The complex may facilitate opening of the processed DNA ends to aid in the recruitment of HerA and NurA. Rad50 controls the balance between DNA end bridging and DNA resection via ATP-dependent structural rearrangements of the Rad50/Mre11 complex. In Methanocaldococcus jannaschii (strain ATCC 43067 / DSM 2661 / JAL-1 / JCM 10045 / NBRC 100440) (Methanococcus jannaschii), this protein is DNA double-strand break repair Rad50 ATPase.